An 89-amino-acid polypeptide reads, in one-letter code: Small ribosomal subunit protein uS14A (89 aa).

Positions 34–54 are disordered; that stretch reads ESLRKLPRDSNPNRLKNRDKI.

It belongs to the universal ribosomal protein uS14 family. Part of the 30S ribosomal subunit. Contacts proteins S3 and S10.

Its function is as follows. Binds 16S rRNA, required for the assembly of 30S particles and may also be responsible for determining the conformation of the 16S rRNA at the A site. This Streptococcus pyogenes serotype M1 protein is Small ribosomal subunit protein uS14A.